Here is a 116-residue protein sequence, read N- to C-terminus: Large ribosomal subunit protein bL19 (116 aa).

The protein belongs to the bacterial ribosomal protein bL19 family.

Functionally, this protein is located at the 30S-50S ribosomal subunit interface and may play a role in the structure and function of the aminoacyl-tRNA binding site. The sequence is that of Large ribosomal subunit protein bL19 from Mycoplasmopsis agalactiae (strain NCTC 10123 / CIP 59.7 / PG2) (Mycoplasma agalactiae).